Consider the following 491-residue polypeptide: UDP-N-acetylmuramate--L-alanine ligase (491 aa).

Residue 126–132 (GTHGKTT) participates in ATP binding.

Belongs to the MurCDEF family.

The protein resides in the cytoplasm. It carries out the reaction UDP-N-acetyl-alpha-D-muramate + L-alanine + ATP = UDP-N-acetyl-alpha-D-muramoyl-L-alanine + ADP + phosphate + H(+). It functions in the pathway cell wall biogenesis; peptidoglycan biosynthesis. In terms of biological role, cell wall formation. The protein is UDP-N-acetylmuramate--L-alanine ligase of Salmonella typhimurium (strain LT2 / SGSC1412 / ATCC 700720).